The chain runs to 169 residues: Protein-export protein SecB (169 aa).

The protein belongs to the SecB family. As to quaternary structure, homotetramer, a dimer of dimers. One homotetramer interacts with 1 SecA dimer.

It localises to the cytoplasm. Functionally, one of the proteins required for the normal export of preproteins out of the cell cytoplasm. It is a molecular chaperone that binds to a subset of precursor proteins, maintaining them in a translocation-competent state. It also specifically binds to its receptor SecA. The sequence is that of Protein-export protein SecB from Mannheimia succiniciproducens (strain KCTC 0769BP / MBEL55E).